The primary structure comprises 359 residues: DNA polymerase IV (359 aa).

One can recognise a UmuC domain in the interval 4 to 185 (IIHIDMDCYF…LSLRKIPGVG (182 aa)). Mg(2+) is bound by residues aspartate 8 and aspartate 103. Glutamate 104 is an active-site residue.

It belongs to the DNA polymerase type-Y family. As to quaternary structure, monomer. It depends on Mg(2+) as a cofactor.

It is found in the cytoplasm. The enzyme catalyses DNA(n) + a 2'-deoxyribonucleoside 5'-triphosphate = DNA(n+1) + diphosphate. In terms of biological role, poorly processive, error-prone DNA polymerase involved in untargeted mutagenesis. Copies undamaged DNA at stalled replication forks, which arise in vivo from mismatched or misaligned primer ends. These misaligned primers can be extended by PolIV. Exhibits no 3'-5' exonuclease (proofreading) activity. May be involved in translesional synthesis, in conjunction with the beta clamp from PolIII. The polypeptide is DNA polymerase IV (Shewanella sp. (strain MR-7)).